A 163-amino-acid polypeptide reads, in one-letter code: Glutathione peroxidase 1 (163 aa).

Residue Cys-36 is part of the active site.

Belongs to the glutathione peroxidase family.

It is found in the cytoplasm. It catalyses the reaction 2 glutathione + H2O2 = glutathione disulfide + 2 H2O. Functionally, may constitute a glutathione peroxidase-like protective system against oxidative stresses. This is Glutathione peroxidase 1 (gpx-1) from Caenorhabditis elegans.